The chain runs to 136 residues: Magnetite biomineralization protein Mms6 (136 aa).

Residues 1–85 (MGEMEREGAT…AVGGTIWSGK (85 aa)) are Cytoplasmic-facing. A GL repeat region spans residues 86–95 (GLALGLGMGL). A helical transmembrane segment spans residues 86–106 (GLALGLGMGLGAWGPLILGVV). Residues 107–136 (GAGAVYAYMKSRDIEAAQSDEEVELRDALS) are Lumenal-facing. The MIC, self-assembles, binds magnetite, Fe(2+) and Fe(3+) stretch occupies residues 115 to 136 (MKSRDIEAAQSDEEVELRDALS).

It belongs to the magnetosome Mms6 family. Full length protein oligomerizes and interacts with MamA. May undergo cleavage.

The protein resides in the magnetosome membrane. Its function is as follows. Promotes the formation of magnetite in Fe(2+)-rich conditions, when magnetite is not readily formed. Binds both Fe(2+) and Fe(3+). May help control the production of crystals with a specific morphology. May function with MamX, MamY amd MamZ in biomineralization. The 4 genes of this operon collectively influence magnetosome size and number. The chain is Magnetite biomineralization protein Mms6 from Magnetospirillum gryphiswaldense (strain DSM 6361 / JCM 21280 / NBRC 15271 / MSR-1).